Reading from the N-terminus, the 93-residue chain is Co-chaperonin GroES 2 (93 aa).

The segment at 1-20 (MQPLGERIVVQREESETTTA) is disordered.

It belongs to the GroES chaperonin family. In terms of assembly, heptamer of 7 subunits arranged in a ring. Interacts with the chaperonin GroEL.

The protein localises to the cytoplasm. Together with the chaperonin GroEL, plays an essential role in assisting protein folding. The GroEL-GroES system forms a nano-cage that allows encapsulation of the non-native substrate proteins and provides a physical environment optimized to promote and accelerate protein folding. GroES binds to the apical surface of the GroEL ring, thereby capping the opening of the GroEL channel. This Rhodopirellula baltica (strain DSM 10527 / NCIMB 13988 / SH1) protein is Co-chaperonin GroES 2.